A 417-amino-acid polypeptide reads, in one-letter code: Chaperone SurA (417 aa).

An N-terminal signal peptide occupies residues 1–12 (MGAALLCSFAHA). 2 PpiC domains span residues 163-264 (SEEY…KLEE) and 273-372 (RDEV…QVLG).

Its subcellular location is the periplasm. It carries out the reaction [protein]-peptidylproline (omega=180) = [protein]-peptidylproline (omega=0). In terms of biological role, chaperone involved in the correct folding and assembly of outer membrane proteins. Recognizes specific patterns of aromatic residues and the orientation of their side chains, which are found more frequently in integral outer membrane proteins. May act in both early periplasmic and late outer membrane-associated steps of protein maturation. This Pseudomonas aeruginosa (strain ATCC 15692 / DSM 22644 / CIP 104116 / JCM 14847 / LMG 12228 / 1C / PRS 101 / PAO1) protein is Chaperone SurA.